A 283-amino-acid polypeptide reads, in one-letter code: NADPH-dependent 7-cyano-7-deazaguanine reductase (283 aa).

Residue 89–91 coordinates substrate; that stretch reads IES. 91–92 contacts NADPH; the sequence is SK. Cysteine 190 (thioimide intermediate) is an active-site residue. The active-site Proton donor is the aspartate 197. Substrate is bound at residue 229–230; it reads HE. 258-259 is a binding site for NADPH; the sequence is RG.

The protein belongs to the GTP cyclohydrolase I family. QueF type 2 subfamily. Homodimer.

Its subcellular location is the cytoplasm. The enzyme catalyses 7-aminomethyl-7-carbaguanine + 2 NADP(+) = 7-cyano-7-deazaguanine + 2 NADPH + 3 H(+). It functions in the pathway tRNA modification; tRNA-queuosine biosynthesis. In terms of biological role, catalyzes the NADPH-dependent reduction of 7-cyano-7-deazaguanine (preQ0) to 7-aminomethyl-7-deazaguanine (preQ1). The protein is NADPH-dependent 7-cyano-7-deazaguanine reductase of Aromatoleum aromaticum (strain DSM 19018 / LMG 30748 / EbN1) (Azoarcus sp. (strain EbN1)).